The following is a 702-amino-acid chain: Glucosidase 2 subunit beta (702 aa).

A signal peptide spans 1–20; the sequence is MVSMFSLFLLLIEQSPLVAS. N-linked (GlcNAc...) asparagine glycosylation is present at Asn-145. Residues 163 to 228 are a coiled coil; that stretch reads SYREGKEALE…LRGEYFNQLS (66 aa). 2 N-linked (GlcNAc...) asparagine glycosylation sites follow: Asn-240 and Asn-358. A disordered region spans residues 435 to 457; that stretch reads PKVLPPDAVESEQDTNSDHIGTS. Residues 478 to 517 adopt a coiled-coil conformation; that stretch reads KDLVSLEKRFRSCESQVSLLENELKQKMDYKKLLDETEDE. N-linked (GlcNAc...) asparagine glycosylation is found at Asn-520 and Asn-525. Positions 537-689 constitute an MRH domain; sequence SYCLDDILDN…DVVGPLGCNK (153 aa). Intrachain disulfides connect Cys-539–Cys-552, Cys-646–Cys-675, and Cys-660–Cys-687. N-linked (GlcNAc...) asparagine glycosylation is found at Asn-688 and Asn-699.

In terms of assembly, heterodimer of a catalytic subunit alpha (ROT2) and a subunit beta (GTB1).

Its subcellular location is the endoplasmic reticulum. Its function is as follows. Subunit of glucosidase 2, which cleaves sequentially the 2 innermost alpha-1,3-linked glucose residues from the Glc(2)Man(9)GlcNAc(2) oligosaccharide precursor of immature glycoproteins. Specifically required for the cleavage of the final glucose. This Saccharomyces cerevisiae (strain ATCC 204508 / S288c) (Baker's yeast) protein is Glucosidase 2 subunit beta (GTB1).